Reading from the N-terminus, the 240-residue chain is Eukaryotic translation initiation factor 4E-3 (240 aa).

Residues 1-51 (MVVTDSPVSGIMADQNIDPNTTTSPSPKEKHVSAIKAISGDEKAPSKEKKN) form a disordered region. Residues 17 to 26 (IDPNTTTSPS) are compositionally biased toward polar residues. The segment covering 39–51 (SGDEKAPSKEKKN) has biased composition (basic and acidic residues). EIF4G-binding regions lie at residues 65–68 (HCFQ) and 75–111 (FDNPSSKSNQVIWGSSLRSLYTFGTIEEFWSLYNNIH). Residues 83–88 (NQVIWG), K115, and 133–134 (WE) contribute to the mRNA site. C138 and C176 are joined by a disulfide. The tract at residues 159–168 (NTLLALVGEQ) is EIF4G-binding. MRNA contacts are provided by residues 183–188 (RARGDR) and 228–232 (KTLDR).

The protein belongs to the eukaryotic initiation factor 4E family. In terms of assembly, EIF4F is a multi-subunit complex, the composition of which varies with external and internal environmental conditions. It is composed of at least EIF4A, EIF4E and EIF4G. EIF4E is also known to interact with other partners. In higher plants two isoforms of EIF4F have been identified, named isoform EIF4F and isoform EIF(iso)4F. Isoform EIF4F has subunits p220 and p26, whereas isoform EIF(iso)4F has subunits p82 and p28. According to the redox status, the Cys-138-Cys-176 disulfide bridge may have a role in regulating protein function by affecting its ability to bind capped mRNA.

It is found in the nucleus. Its subcellular location is the cytoplasm. Component of the protein complex eIF4F, which is involved in the recognition of the mRNA cap, ATP-dependent unwinding of 5'-terminal secondary structure and recruitment of mRNA to the ribosome. Recognizes and binds the 7-methylguanosine-containing mRNA cap during an early step in the initiation of protein synthesis and facilitates ribosome binding by inducing the unwinding of the mRNAs secondary structures. The polypeptide is Eukaryotic translation initiation factor 4E-3 (Arabidopsis thaliana (Mouse-ear cress)).